We begin with the raw amino-acid sequence, 188 residues long: Elongation factor P (188 aa).

It belongs to the elongation factor P family.

Its subcellular location is the cytoplasm. The protein operates within protein biosynthesis; polypeptide chain elongation. Its function is as follows. Involved in peptide bond synthesis. Stimulates efficient translation and peptide-bond synthesis on native or reconstituted 70S ribosomes in vitro. Probably functions indirectly by altering the affinity of the ribosome for aminoacyl-tRNA, thus increasing their reactivity as acceptors for peptidyl transferase. This Paramagnetospirillum magneticum (strain ATCC 700264 / AMB-1) (Magnetospirillum magneticum) protein is Elongation factor P.